A 140-amino-acid polypeptide reads, in one-letter code: Ribosome-binding factor A (140 aa).

The tract at residues 121–140 (KAAEHGREDEELDDTEQDDK) is disordered. Positions 129–140 (DEELDDTEQDDK) are enriched in acidic residues.

It belongs to the RbfA family. As to quaternary structure, monomer. Binds 30S ribosomal subunits, but not 50S ribosomal subunits or 70S ribosomes.

It localises to the cytoplasm. One of several proteins that assist in the late maturation steps of the functional core of the 30S ribosomal subunit. Associates with free 30S ribosomal subunits (but not with 30S subunits that are part of 70S ribosomes or polysomes). Required for efficient processing of 16S rRNA. May interact with the 5'-terminal helix region of 16S rRNA. The polypeptide is Ribosome-binding factor A (Shewanella loihica (strain ATCC BAA-1088 / PV-4)).